Reading from the N-terminus, the 125-residue chain is Neuraminyllactose-binding hemagglutinin (125 aa).

The tract at residues 92–97 (KRTIQK) is N-acetyl-neuraminyl-alpha(2,3)-lactose binding motif.

The protein localises to the cell outer membrane. The protein is Neuraminyllactose-binding hemagglutinin (hpaA) of Helicobacter pylori (Campylobacter pylori).